Reading from the N-terminus, the 382-residue chain is Anhydro-N-acetylmuramic acid kinase (382 aa).

22–29 (GTSMDGVD) provides a ligand contact to ATP.

Belongs to the anhydro-N-acetylmuramic acid kinase family.

The catalysed reaction is 1,6-anhydro-N-acetyl-beta-muramate + ATP + H2O = N-acetyl-D-muramate 6-phosphate + ADP + H(+). Its pathway is amino-sugar metabolism; 1,6-anhydro-N-acetylmuramate degradation. It participates in cell wall biogenesis; peptidoglycan recycling. Its function is as follows. Catalyzes the specific phosphorylation of 1,6-anhydro-N-acetylmuramic acid (anhMurNAc) with the simultaneous cleavage of the 1,6-anhydro ring, generating MurNAc-6-P. Is required for the utilization of anhMurNAc either imported from the medium or derived from its own cell wall murein, and thus plays a role in cell wall recycling. In Burkholderia vietnamiensis (strain G4 / LMG 22486) (Burkholderia cepacia (strain R1808)), this protein is Anhydro-N-acetylmuramic acid kinase.